The sequence spans 269 residues: MNGSNPIIEFKDVSFQYQSDAAFTLNRVSFSIPAGQWTSIVGHNGSGKSTIAKLMVGIEEPSEGQILFQNLPVDSQNKREVRKHIGIVFQNPDNQFVGSIVKFDVAFGLENQLVPYKEMVSKVNQVLTEVDMINKADDEPHSLSGGQKQRVAIAGVLALNPDVLILDEATTMLDPHGKSSLLNLVNEVKVNNHVTIISITHDLDEAMHADQIIVLNKGTVFKQGTPQDIFKCEEALISVGLDLPFPLKMNRLLGFDSTYVTYEGLIKKL.

The 235-residue stretch at 8-242 (IEFKDVSFQY…EEALISVGLD (235 aa)) folds into the ABC transporter domain. 42–49 (GHNGSGKS) serves as a coordination point for ATP.

The protein belongs to the ABC transporter superfamily. Energy-coupling factor EcfA family. As to quaternary structure, forms a stable energy-coupling factor (ECF) transporter complex composed of 2 membrane-embedded substrate-binding proteins (S component), 2 ATP-binding proteins (A component) and 2 transmembrane proteins (T component).

The protein resides in the cell membrane. Functionally, ATP-binding (A) component of a common energy-coupling factor (ECF) ABC-transporter complex. Unlike classic ABC transporters this ECF transporter provides the energy necessary to transport a number of different substrates. The polypeptide is Energy-coupling factor transporter ATP-binding protein EcfA1 (Staphylococcus epidermidis (strain ATCC 35984 / DSM 28319 / BCRC 17069 / CCUG 31568 / BM 3577 / RP62A)).